We begin with the raw amino-acid sequence, 320 residues long: UDP-N-acetylenolpyruvoylglucosamine reductase (320 aa).

The FAD-binding PCMH-type domain maps to 34–200 (RAGGLAEVFF…TSAVFEGFAE (167 aa)). R180 is a catalytic residue. S229 acts as the Proton donor in catalysis. E299 is an active-site residue.

It belongs to the MurB family. Requires FAD as cofactor.

The protein localises to the cytoplasm. The enzyme catalyses UDP-N-acetyl-alpha-D-muramate + NADP(+) = UDP-N-acetyl-3-O-(1-carboxyvinyl)-alpha-D-glucosamine + NADPH + H(+). It functions in the pathway cell wall biogenesis; peptidoglycan biosynthesis. Cell wall formation. The chain is UDP-N-acetylenolpyruvoylglucosamine reductase from Mesorhizobium japonicum (strain LMG 29417 / CECT 9101 / MAFF 303099) (Mesorhizobium loti (strain MAFF 303099)).